We begin with the raw amino-acid sequence, 231 residues long: Putative histone H1.9 (231 aa).

The H15 domain maps to 113 to 177 (QKPSTSKVIL…GSAGSFTLGK (65 aa)). At serine 135 the chain carries Phosphoserine. A disordered region spans residues 177-214 (KKQASKSKLKVKRQRQQRWRSGQRPFGQHRSLLGSKQG). Residues 179-194 (QASKSKLKVKRQRQQR) are compositionally biased toward basic residues.

Belongs to the histone H1/H5 family. Expressed exclusively in the testis.

It localises to the nucleus. The protein localises to the chromosome. Functionally, DNA-binding protein that may be implicated in chromatin remodeling and/or transcriptional regulation during spermiogenesis, the process of spermatid maturation into spermatozoa. The protein is Putative histone H1.9 of Homo sapiens (Human).